A 53-amino-acid chain; its full sequence is UPF0391 membrane protein msr4317 (53 aa).

A run of 2 helical transmembrane segments spans residues 4–24 (WIII…PALA) and 33–53 (ILIG…FAVT).

It belongs to the UPF0391 family.

Its subcellular location is the cell membrane. The protein is UPF0391 membrane protein msr4317 of Mesorhizobium japonicum (strain LMG 29417 / CECT 9101 / MAFF 303099) (Mesorhizobium loti (strain MAFF 303099)).